Here is a 1075-residue protein sequence, read N- to C-terminus: Putative type I restriction enzyme MjaVIIP endonuclease subunit (1075 aa).

It belongs to the HsdR family. The type I restriction/modification system is composed of three polypeptides R, M and S.

The catalysed reaction is Endonucleolytic cleavage of DNA to give random double-stranded fragments with terminal 5'-phosphates, ATP is simultaneously hydrolyzed.. In terms of biological role, the restriction (R) subunit of a type I restriction enzyme that recognizes 5'-CAAN(7)TGG-3' and cleaves a random distance away. The R subunit is required for both endonuclease and ATPase activities but not for modification. After locating a non-methylated recognition site, the enzyme complex serves as a molecular motor that translocates DNA in an ATP-dependent manner until a collision occurs that triggers cleavage. In Methanocaldococcus jannaschii (strain ATCC 43067 / DSM 2661 / JAL-1 / JCM 10045 / NBRC 100440) (Methanococcus jannaschii), this protein is Putative type I restriction enzyme MjaVIIP endonuclease subunit.